The chain runs to 155 residues: DNA gyrase inhibitor (155 aa).

Belongs to the DNA gyrase inhibitor family. Interacts with DNA gyrase.

The protein resides in the cytoplasm. Functionally, inhibits the supercoiling activity of DNA gyrase. Acts by inhibiting DNA gyrase at an early step, prior to (or at the step of) binding of DNA by the gyrase. It protects cells against toxins that target DNA gyrase, by inhibiting activity of these toxins and reducing the formation of lethal double-strand breaks in the cell. In Escherichia fergusonii (strain ATCC 35469 / DSM 13698 / CCUG 18766 / IAM 14443 / JCM 21226 / LMG 7866 / NBRC 102419 / NCTC 12128 / CDC 0568-73), this protein is DNA gyrase inhibitor.